A 195-amino-acid chain; its full sequence is Imidazoleglycerol-phosphate dehydratase (195 aa).

The protein belongs to the imidazoleglycerol-phosphate dehydratase family.

It localises to the cytoplasm. The catalysed reaction is D-erythro-1-(imidazol-4-yl)glycerol 3-phosphate = 3-(imidazol-4-yl)-2-oxopropyl phosphate + H2O. It participates in amino-acid biosynthesis; L-histidine biosynthesis; L-histidine from 5-phospho-alpha-D-ribose 1-diphosphate: step 6/9. This is Imidazoleglycerol-phosphate dehydratase from Bordetella petrii (strain ATCC BAA-461 / DSM 12804 / CCUG 43448).